Consider the following 140-residue polypeptide: uncharacterized protein (140 aa).

A run of 14 repeats spans residues 1–10, 11–20, 21–30, 31–40, 41–50, 51–60, 61–70, 71–80, 81–90, 91–100, 101–110, 111–120, 121–130, and 131–140. Residues 1–140 form a 14 X 10 AA tandem repeats of [MT]-F-[AG]-R-L-[CS]-P-V-[SI]-[ET] region; the sequence is MFARLCPVSE…MFGRLCPVIT (140 aa).

This is an uncharacterized protein from Homo sapiens (Human).